The sequence spans 371 residues: Aldose sugar dehydrogenase YliI (371 aa).

Residues 1-20 (MHRQSFFLVPLICLSSALWA) form the signal peptide. Glutamine 82 provides a ligand contact to pyrroloquinoline quinone. Residue histidine 147 is the Proton acceptor of the active site. Positions 214-215 (RN) are PQQ. Ca(2+)-binding residues include glutamate 240 and tyrosine 250. Tyrosine 261 contacts pyrroloquinoline quinone. PQQ stretches follow at residues 312–314 (ALK) and 341–343 (RIR).

This sequence belongs to the PQQ oxidoreductase GdhB family. In terms of assembly, monomer. Ca(2+) serves as cofactor. Pyrroloquinoline quinone is required as a cofactor.

It is found in the cell outer membrane. Its function is as follows. Aldose sugar dehydrogenase with broad substrate specificity. The physiological substrate is unknown. Can oxidize glucose to gluconolactone. Can also utilize D-arabinose, L-arabinose and 2-deoxy-glucose. Has higher activity towards oligomeric sugars, such as maltose, maltotriose or cellobiose. It may function to input sugar-derived electrons into the respiratory network. In Escherichia coli (strain K12), this protein is Aldose sugar dehydrogenase YliI (yliI).